The chain runs to 461 residues: Flavin-containing monooxygenase FMO GS-OX-like 8 (461 aa).

20-25 (GAGPSG) serves as a coordination point for FAD. 220–225 (GCSMSG) is a binding site for NADP(+).

The protein belongs to the FMO family. Interacts with EER5. The cofactor is FAD.

In terms of biological role, catalyzes the conversion of methylthioalkyl glucosinolates of any chain length into methylsulfinylalkyl glucosinolates. The polypeptide is Flavin-containing monooxygenase FMO GS-OX-like 8 (Arabidopsis thaliana (Mouse-ear cress)).